A 311-amino-acid polypeptide reads, in one-letter code: Methionyl-tRNA formyltransferase (311 aa).

Position 117 to 120 (serine 117 to proline 120) interacts with (6S)-5,6,7,8-tetrahydrofolate.

This sequence belongs to the Fmt family.

It catalyses the reaction L-methionyl-tRNA(fMet) + (6R)-10-formyltetrahydrofolate = N-formyl-L-methionyl-tRNA(fMet) + (6S)-5,6,7,8-tetrahydrofolate + H(+). Functionally, attaches a formyl group to the free amino group of methionyl-tRNA(fMet). The formyl group appears to play a dual role in the initiator identity of N-formylmethionyl-tRNA by promoting its recognition by IF2 and preventing the misappropriation of this tRNA by the elongation apparatus. The polypeptide is Methionyl-tRNA formyltransferase (Bordetella avium (strain 197N)).